A 95-amino-acid polypeptide reads, in one-letter code: Aspartyl/glutamyl-tRNA(Asn/Gln) amidotransferase subunit C (95 aa).

This sequence belongs to the GatC family. In terms of assembly, heterotrimer of A, B and C subunits.

It carries out the reaction L-glutamyl-tRNA(Gln) + L-glutamine + ATP + H2O = L-glutaminyl-tRNA(Gln) + L-glutamate + ADP + phosphate + H(+). The enzyme catalyses L-aspartyl-tRNA(Asn) + L-glutamine + ATP + H2O = L-asparaginyl-tRNA(Asn) + L-glutamate + ADP + phosphate + 2 H(+). Its function is as follows. Allows the formation of correctly charged Asn-tRNA(Asn) or Gln-tRNA(Gln) through the transamidation of misacylated Asp-tRNA(Asn) or Glu-tRNA(Gln) in organisms which lack either or both of asparaginyl-tRNA or glutaminyl-tRNA synthetases. The reaction takes place in the presence of glutamine and ATP through an activated phospho-Asp-tRNA(Asn) or phospho-Glu-tRNA(Gln). This is Aspartyl/glutamyl-tRNA(Asn/Gln) amidotransferase subunit C from Azotobacter vinelandii (strain DJ / ATCC BAA-1303).